We begin with the raw amino-acid sequence, 312 residues long: Pantothenate kinase (312 aa).

92–99 (GSVAVGKS) serves as a coordination point for ATP.

This sequence belongs to the prokaryotic pantothenate kinase family.

The protein resides in the cytoplasm. The catalysed reaction is (R)-pantothenate + ATP = (R)-4'-phosphopantothenate + ADP + H(+). It functions in the pathway cofactor biosynthesis; coenzyme A biosynthesis; CoA from (R)-pantothenate: step 1/5. The polypeptide is Pantothenate kinase (coaA) (Vibrio cholerae serotype O1 (strain ATCC 39315 / El Tor Inaba N16961)).